A 441-amino-acid polypeptide reads, in one-letter code: Ribulose bisphosphate carboxylase large chain (441 aa).

The substrate site is built by Asn89 and Thr139. Lys141 serves as the catalytic Proton acceptor. Lys143 is a binding site for substrate. Positions 167, 169, and 170 each coordinate Mg(2+). An N6-carboxylysine modification is found at Lys167. The active-site Proton acceptor is the His260. Substrate-binding residues include Arg261, His293, and Ser345.

The protein belongs to the RuBisCO large chain family. Type I subfamily. Heterohexadecamer of 8 large chains and 8 small chains; disulfide-linked. The disulfide link is formed within the large subunit homodimers. It depends on Mg(2+) as a cofactor. Post-translationally, the disulfide bond which can form in the large chain dimeric partners within the hexadecamer appears to be associated with oxidative stress and protein turnover.

The protein resides in the plastid. Its subcellular location is the chloroplast. The catalysed reaction is 2 (2R)-3-phosphoglycerate + 2 H(+) = D-ribulose 1,5-bisphosphate + CO2 + H2O. The enzyme catalyses D-ribulose 1,5-bisphosphate + O2 = 2-phosphoglycolate + (2R)-3-phosphoglycerate + 2 H(+). In terms of biological role, ruBisCO catalyzes two reactions: the carboxylation of D-ribulose 1,5-bisphosphate, the primary event in carbon dioxide fixation, as well as the oxidative fragmentation of the pentose substrate in the photorespiration process. Both reactions occur simultaneously and in competition at the same active site. The protein is Ribulose bisphosphate carboxylase large chain of Coriandrum sativum (Coriander).